Consider the following 298-residue polypeptide: Bifunctional protein FolD (298 aa).

NADP(+)-binding positions include 166–168 (GRS), Ser-195, and Ile-236.

It belongs to the tetrahydrofolate dehydrogenase/cyclohydrolase family. As to quaternary structure, homodimer.

It catalyses the reaction (6R)-5,10-methylene-5,6,7,8-tetrahydrofolate + NADP(+) = (6R)-5,10-methenyltetrahydrofolate + NADPH. It carries out the reaction (6R)-5,10-methenyltetrahydrofolate + H2O = (6R)-10-formyltetrahydrofolate + H(+). The protein operates within one-carbon metabolism; tetrahydrofolate interconversion. Functionally, catalyzes the oxidation of 5,10-methylenetetrahydrofolate to 5,10-methenyltetrahydrofolate and then the hydrolysis of 5,10-methenyltetrahydrofolate to 10-formyltetrahydrofolate. In Chlorobium phaeobacteroides (strain BS1), this protein is Bifunctional protein FolD.